Consider the following 243-residue polypeptide: 1-(5-phosphoribosyl)-5-[(5-phosphoribosylamino)methylideneamino] imidazole-4-carboxamide isomerase (243 aa).

Catalysis depends on D8, which acts as the Proton acceptor. Residue D129 is the Proton donor of the active site.

It belongs to the HisA/HisF family.

The protein resides in the cytoplasm. It catalyses the reaction 1-(5-phospho-beta-D-ribosyl)-5-[(5-phospho-beta-D-ribosylamino)methylideneamino]imidazole-4-carboxamide = 5-[(5-phospho-1-deoxy-D-ribulos-1-ylimino)methylamino]-1-(5-phospho-beta-D-ribosyl)imidazole-4-carboxamide. The protein operates within amino-acid biosynthesis; L-histidine biosynthesis; L-histidine from 5-phospho-alpha-D-ribose 1-diphosphate: step 4/9. The sequence is that of 1-(5-phosphoribosyl)-5-[(5-phosphoribosylamino)methylideneamino] imidazole-4-carboxamide isomerase from Geobacter sp. (strain M21).